A 482-amino-acid polypeptide reads, in one-letter code: Glutamyl-tRNA(Gln) amidotransferase subunit A (482 aa).

Active-site charge relay system residues include K75 and S150. S174 (acyl-ester intermediate) is an active-site residue.

It belongs to the amidase family. GatA subfamily. As to quaternary structure, heterotrimer of A, B and C subunits.

It catalyses the reaction L-glutamyl-tRNA(Gln) + L-glutamine + ATP + H2O = L-glutaminyl-tRNA(Gln) + L-glutamate + ADP + phosphate + H(+). Functionally, allows the formation of correctly charged Gln-tRNA(Gln) through the transamidation of misacylated Glu-tRNA(Gln) in organisms which lack glutaminyl-tRNA synthetase. The reaction takes place in the presence of glutamine and ATP through an activated gamma-phospho-Glu-tRNA(Gln). This is Glutamyl-tRNA(Gln) amidotransferase subunit A from Rippkaea orientalis (strain PCC 8801 / RF-1) (Cyanothece sp. (strain PCC 8801)).